The primary structure comprises 351 residues: N-acetyl-gamma-glutamyl-phosphate reductase (351 aa).

C154 is an active-site residue.

Belongs to the NAGSA dehydrogenase family. Type 1 subfamily.

It is found in the cytoplasm. It catalyses the reaction N-acetyl-L-glutamate 5-semialdehyde + phosphate + NADP(+) = N-acetyl-L-glutamyl 5-phosphate + NADPH + H(+). The protein operates within amino-acid biosynthesis; L-arginine biosynthesis; N(2)-acetyl-L-ornithine from L-glutamate: step 3/4. Its function is as follows. Catalyzes the NADPH-dependent reduction of N-acetyl-5-glutamyl phosphate to yield N-acetyl-L-glutamate 5-semialdehyde. This Prochlorococcus marinus (strain AS9601) protein is N-acetyl-gamma-glutamyl-phosphate reductase.